A 183-amino-acid chain; its full sequence is UPF0316 protein BcerKBAB4_3093 (183 aa).

3 helical membrane passes run 6–26, 32–52, and 58–78; these read LIFV…ILLV, SAAG…GIVF, and WMNI…GGYI.

This sequence belongs to the UPF0316 family.

The protein localises to the cell membrane. The chain is UPF0316 protein BcerKBAB4_3093 from Bacillus mycoides (strain KBAB4) (Bacillus weihenstephanensis).